The primary structure comprises 64 residues: LSGVRVTDLHAGVNPGDPVEVFYAVKYTPLFNYFLKVMPYSTVLTTSLINILYXDNVALAFXXI.

The protein belongs to the class-I aminoacyl-tRNA synthetase family. As to quaternary structure, member of a complex that includes annexin.

The catalysed reaction is tRNA(Ile) + L-isoleucine + ATP = L-isoleucyl-tRNA(Ile) + AMP + diphosphate. This chain is Putative isoleucine--tRNA ligase, found in Physarum polycephalum (Slime mold).